A 549-amino-acid polypeptide reads, in one-letter code: Dihydroxy-acid dehydratase (549 aa).

Residue aspartate 78 participates in Mg(2+) binding. Cysteine 119 provides a ligand contact to [2Fe-2S] cluster. Mg(2+) contacts are provided by aspartate 120 and lysine 121. Lysine 121 is modified (N6-carboxylysine). Cysteine 192 contributes to the [2Fe-2S] cluster binding site. Glutamate 439 contributes to the Mg(2+) binding site. Serine 465 functions as the Proton acceptor in the catalytic mechanism.

Belongs to the IlvD/Edd family. In terms of assembly, homodimer. [2Fe-2S] cluster serves as cofactor. Requires Mg(2+) as cofactor.

It catalyses the reaction (2R)-2,3-dihydroxy-3-methylbutanoate = 3-methyl-2-oxobutanoate + H2O. The enzyme catalyses (2R,3R)-2,3-dihydroxy-3-methylpentanoate = (S)-3-methyl-2-oxopentanoate + H2O. The protein operates within amino-acid biosynthesis; L-isoleucine biosynthesis; L-isoleucine from 2-oxobutanoate: step 3/4. It functions in the pathway amino-acid biosynthesis; L-valine biosynthesis; L-valine from pyruvate: step 3/4. Its function is as follows. Functions in the biosynthesis of branched-chain amino acids. Catalyzes the dehydration of (2R,3R)-2,3-dihydroxy-3-methylpentanoate (2,3-dihydroxy-3-methylvalerate) into 2-oxo-3-methylpentanoate (2-oxo-3-methylvalerate) and of (2R)-2,3-dihydroxy-3-methylbutanoate (2,3-dihydroxyisovalerate) into 2-oxo-3-methylbutanoate (2-oxoisovalerate), the penultimate precursor to L-isoleucine and L-valine, respectively. The chain is Dihydroxy-acid dehydratase from Endomicrobium trichonymphae.